The sequence spans 366 residues: Aldo-keto reductase AFTS1 (366 aa).

D75 provides a ligand contact to NADP(+). Residue Y80 is the Proton donor of the active site. Position 172 (H172) interacts with substrate. Residues 202-203 (SS), Q228, 257-267 (GSLASGRLARP), and 329-337 (SSVERIDEA) contribute to the NADP(+) site.

The protein belongs to the aldo/keto reductase family.

Its pathway is mycotoxin biosynthesis. In terms of biological role, aldo-keto reductase; part of the gene clusters that mediate the biosynthesis of the host-selective toxins (HSTs) AF-toxins responsible for Alternaria black spot of strawberry disease by the strawberry pathotype. AF-toxin I and III are valine derivatives of 2,3-dyhydroxy-isovaleric acid and 2-hydroxy-isovaleric acid respectively, while AF II is an isoleucine derivative of 2-hydroxy-valeric acid. These derivatives are bound to a 9,10-epoxy-8-hydroxy-9-methyl-decatrienoic acid (EDA) moiety. On cellular level, AF-toxins affect plasma membrane of susceptible cells and cause a sudden increase in loss of K(+) after a few minutes of toxin treatment. The aldo-keto reductase AFTS1 catalyzes the conversion of 2-keto-isovaleric acid (2-KIV) to 2-hydroxy-isovaleric acid (2-HIV) by reduction of its ketone to an alcohol. The acyl-CoA ligase AFT1, the hydrolase AFT2 and the enoyl-CoA hydratases AFT3 and AFT6, but also the polyketide synthase AFT9, the acyl-CoA dehydrogenase AFT10, the cytochrome P450 monooxygenase AFT11 and the oxidoreductase AFT12 are all involved in the biosynthesis of the AK-, AF- and ACT-toxin common EDA structural moiety. The exact function of each enzyme, and of additional enzymes identified within the AF-toxin clusters have still to be determined. This chain is Aldo-keto reductase AFTS1, found in Alternaria alternata (Alternaria rot fungus).